The primary structure comprises 651 residues: Probable potassium transport system protein Kup (651 aa).

A run of 12 helical transmembrane segments spans residues 41–61 (LVLG…IYAF), 82–102 (VVSL…VLFV), 130–150 (LILG…VITP), 163–183 (IVAP…LVTL), 194–214 (VAIV…ASGL), 235–255 (FLTV…LAMT), 276–296 (WLWI…AFIL), 309–329 (MIPS…TVIA), 366–386 (IYIP…VLGF), 395–415 (AYGI…YIVM), 426–446 (ALPI…ANII), and 450–470 (EGGW…WTWV).

The protein belongs to the HAK/KUP transporter (TC 2.A.72) family.

The protein resides in the cell inner membrane. The catalysed reaction is K(+)(in) + H(+)(in) = K(+)(out) + H(+)(out). Its function is as follows. Transport of potassium into the cell. Likely operates as a K(+):H(+) symporter. This Brucella melitensis biotype 2 (strain ATCC 23457) protein is Probable potassium transport system protein Kup.